Here is a 173-residue protein sequence, read N- to C-terminus: Alpha-crystallin A chain (173 aa).

Methionine 1 is subject to N-acetylmethionine. Residues 1-63 form a required for complex formation with BFSP1 and BFSP2 region; sequence MDIAIQHPWF…RTVLDSGISE (63 aa). Residue glutamine 6 is modified to Deamidated glutamine; partial. The residue at position 45 (serine 45) is a Phosphoserine. Glutamine 50 carries the post-translational modification Deamidated glutamine; partial. Positions 52-162 constitute a sHSP domain; that stretch reads LFRTVLDSGI…GHSERAIPVS (111 aa). An N6-acetyllysine modification is found at lysine 70. Position 90 is a deamidated glutamine; partial (glutamine 90). The residue at position 99 (lysine 99) is an N6-acetyllysine. Histidine 100 contributes to the Zn(2+) binding site. At asparagine 101 the chain carries Deamidated asparagine; partial. Zn(2+)-binding residues include glutamate 102 and histidine 107. The residue at position 122 (serine 122) is a Phosphoserine. Asparagine 123 bears the Deamidated asparagine; partial mark. Residues 144-173 are disordered; it reads PKVPSGVDAGHSERAIPVSREEKPSSAPSS. The span at 153 to 167 shows a compositional bias: basic and acidic residues; sequence GHSERAIPVSREEKP. Residue histidine 154 coordinates Zn(2+). O-linked (GlcNAc) serine glycosylation is present at serine 162.

The protein belongs to the small heat shock protein (HSP20) family. Heteromer composed of three CRYAA and one CRYAB subunits. Inter-subunit bridging via zinc ions enhances stability, which is crucial as there is no protein turn over in the lens. Can also form homodimers and homotetramers (dimers of dimers) which serve as the building blocks of homooligomers. Within homooligomers, the zinc-binding motif is created from residues of 3 different molecules. His-100 and Glu-102 from one molecule are ligands of the zinc ion, and His-107 and His-154 residues from additional molecules complete the site with tetrahedral coordination geometry. Part of a complex required for lens intermediate filament formation composed of BFSP1, BFSP2 and CRYAA. In terms of processing, acetylation at Lys-70 may increase chaperone activity. Undergoes age-dependent proteolytical cleavage at the C-terminus.

Its subcellular location is the cytoplasm. It is found in the nucleus. In terms of biological role, contributes to the transparency and refractive index of the lens. Acts as a chaperone, preventing aggregation of various proteins under a wide range of stress conditions. Required for the correct formation of lens intermediate filaments as part of a complex composed of BFSP1, BFSP2 and CRYAA. The protein is Alpha-crystallin A chain (CRYAA) of Pteropus poliocephalus (Grey-headed flying fox).